The following is a 635-amino-acid chain: Probable ethylene response sensor 2 (635 aa).

The next 3 membrane-spanning stretches (helical) occupy residues 24 to 44 (ISDF…IYFV), 59 to 79 (FGAF…TFAI), and 94 to 114 (ATAV…PDLL). 2 residues coordinate Cu cation: Cys-66 and His-70. The GAF domain maps to 159 to 308 (DRHTILRTTL…VVADQVAVAL (150 aa)). Positions 351–589 (VMNHEMRTPM…MFFVKLGMPE (239 aa)) constitute a Histidine kinase domain. His-354 bears the Phosphohistidine; by autocatalysis mark.

It belongs to the ethylene receptor family. In terms of assembly, homodimer. Cu cation is required as a cofactor. Expressed in anthers and hulls.

It localises to the endoplasmic reticulum membrane. The catalysed reaction is ATP + protein L-histidine = ADP + protein N-phospho-L-histidine.. Ethylene receptor related to bacterial two-component regulators. Acts as a negative regulator of ethylene signaling. May play a role in the regulation of flowering by up-regulating GI (GIGANTEA) and RCN1 and regulate starch accumulation by down-regulating the alpha-amylase AMY3D. The chain is Probable ethylene response sensor 2 from Oryza sativa subsp. indica (Rice).